The primary structure comprises 447 residues: Probable glycine dehydrogenase (decarboxylating) subunit 1 (447 aa).

This sequence belongs to the GcvP family. N-terminal subunit subfamily. The glycine cleavage system is composed of four proteins: P, T, L and H. In this organism, the P 'protein' is a heterodimer of two subunits.

The catalysed reaction is N(6)-[(R)-lipoyl]-L-lysyl-[glycine-cleavage complex H protein] + glycine + H(+) = N(6)-[(R)-S(8)-aminomethyldihydrolipoyl]-L-lysyl-[glycine-cleavage complex H protein] + CO2. Its function is as follows. The glycine cleavage system catalyzes the degradation of glycine. The P protein binds the alpha-amino group of glycine through its pyridoxal phosphate cofactor; CO(2) is released and the remaining methylamine moiety is then transferred to the lipoamide cofactor of the H protein. This Bacillus anthracis (strain A0248) protein is Probable glycine dehydrogenase (decarboxylating) subunit 1.